The sequence spans 545 residues: Glutamyl-tRNA(Gln) amidotransferase subunit B-1, chloroplastic/mitochondrial (545 aa).

The protein belongs to the GatB/GatE family. GatB subfamily. In terms of assembly, subunit of the heterotrimeric GatCAB amidotransferase (AdT) complex, composed of A, B and C subunits.

The protein localises to the mitochondrion. The protein resides in the plastid. It is found in the chloroplast. The catalysed reaction is L-glutamyl-tRNA(Gln) + L-glutamine + ATP + H2O = L-glutaminyl-tRNA(Gln) + L-glutamate + ADP + phosphate + H(+). Functionally, allows the formation of correctly charged Gln-tRNA(Gln) through the transamidation of misacylated Glu-tRNA(Gln) in chloroplasts and mitochondria. The reaction takes place in the presence of glutamine and ATP through an activated gamma-phospho-Glu-tRNA(Gln). In Micromonas pusilla (strain CCMP1545) (Picoplanktonic green alga), this protein is Glutamyl-tRNA(Gln) amidotransferase subunit B-1, chloroplastic/mitochondrial.